A 264-amino-acid chain; its full sequence is Apolipoprotein A-I (264 aa).

Residues 1–18 (MKAVVLTVAVLFLTGSQA) form the signal peptide. A run of 2 repeats spans residues 67-88 (LKLL…EQLG) and 89-110 (PVTQ…QEMN). The segment at 67 to 264 (LKLLDNWDTL…DDAAKKLSSQ (198 aa)) is 10 X approximate tandem repeats. Met109 carries the methionine sulfoxide modification. The stretch at 111-121 (KDLEEVKQKVQ) is one 3; half-length repeat. 3 tandem repeats follow at residues 122–143 (PYLE…QKVE), 144–165 (PLST…EKLT), and 166–187 (PLGE…TQLA). A 7; truncated repeat occupies 188–207 (PYSDKMRERLAERLTALKDS). Position 193 is a methionine sulfoxide (Met193). Residues 208-229 (ASFAEYHAKASEHLKTLREKAK) form repeat 8. The 9; half-length repeat unit spans residues 230–240 (PAIEDLGQGLL). The stretch at 241–264 (PVLENLKASFLSAIDDAAKKLSSQ) is repeat 10.

It belongs to the apolipoprotein A1/A4/E family. As to quaternary structure, homodimer. Interacts with APOA1BP and CLU. Component of a sperm activating protein complex (SPAP), consisting of APOA1, an immunoglobulin heavy chain, an immunoglobulin light chain and albumin. Interacts with NDRG1. Interacts with SCGB3A2. Interacts with NAXE and YJEFN3. Post-translationally, glycosylated. Palmitoylated. In terms of processing, phosphorylation sites are present in the extracellular medium.

The protein resides in the secreted. In terms of biological role, participates in the reverse transport of cholesterol from tissues to the liver for excretion by promoting cholesterol efflux from tissues and by acting as a cofactor for the lecithin cholesterol acyltransferase (LCAT). As part of the SPAP complex, activates spermatozoa motility. This chain is Apolipoprotein A-I (APOA1), found in Castor canadensis (American beaver).